Reading from the N-terminus, the 254-residue chain is Alcohol dehydrogenase 2 (254 aa).

Position 10-33 (10-33 (FVAGLGGIGLDTSREIVKSGPKNL)) interacts with NAD(+). Serine 138 contributes to the substrate binding site. Catalysis depends on tyrosine 151, which acts as the Proton acceptor.

It belongs to the short-chain dehydrogenases/reductases (SDR) family. Homodimer.

It carries out the reaction a primary alcohol + NAD(+) = an aldehyde + NADH + H(+). The enzyme catalyses a secondary alcohol + NAD(+) = a ketone + NADH + H(+). This is Alcohol dehydrogenase 2 (Adh2) from Drosophila hydei (Fruit fly).